A 131-amino-acid chain; its full sequence is Large ribosomal subunit protein uL22c (131 aa).

Belongs to the universal ribosomal protein uL22 family. As to quaternary structure, part of the 50S ribosomal subunit.

The protein localises to the plastid. Its function is as follows. This protein binds specifically to 23S rRNA. Functionally, the globular domain of the protein is located near the polypeptide exit tunnel on the outside of the subunit, while an extended beta-hairpin is found that lines the wall of the exit tunnel in the center of the 70S ribosome. The chain is Large ribosomal subunit protein uL22c (rpl22) from Aneura mirabilis (Parasitic liverwort).